The primary structure comprises 416 residues: Phosphatidylinositol 5-phosphate 4-kinase type-2 beta (416 aa).

Residue Ser2 is modified to N-acetylserine. At Thr8 the chain carries Phosphothreonine. The residue at position 19 (Ser19) is a Phosphoserine. The 378-residue stretch at 38-415 (ASEPILSVLM…RFNEFMSNIL (378 aa)) folds into the PIPK domain. Residues 64 to 70 (VMLMPDD) are required for interaction with PIP5K1A. Residues Lys94 and Lys150 each carry the N6-acetyllysine modification. ATP contacts are provided by residues 202–204 (RNV) and Lys214. GTP is bound by residues 203–204 (NV) and Lys214. Thr322 bears the Phosphothreonine mark. Ser326 is subject to Phosphoserine. Asp369 serves as a coordination point for GTP.

In terms of assembly, homodimer. Binds TNFRSF1A. Interacts with PIP4K2A; the interaction suppresses ubiquitination by the SPOP/CUL3 complex. Probably interacts with PIP5K1A; the interaction inhibits PIP5K1A kinase activity. Ubiquitinated by the SPOP/CUL3 complex. Ubiquitination is stimulated by PtdIns5P levels. Post-translationally, phosphorylated on serine residues.

The protein localises to the endoplasmic reticulum membrane. The protein resides in the cell membrane. It is found in the nucleus. It localises to the cytoplasm. It catalyses the reaction a 1,2-diacyl-sn-glycero-3-phospho-(1D-myo-inositol-5-phosphate) + ATP = a 1,2-diacyl-sn-glycero-3-phospho-(1D-myo-inositol-4,5-bisphosphate) + ADP + H(+). It carries out the reaction 1,2-dihexadecanoyl-sn-glycero-3-phospho-(1D-myo-inositol-5-phosphate) + ATP = 1,2-dihexadecanoyl-sn-glycero-3-phospho-(1D-myo-inositol-4,5-bisphosphate) + ADP + H(+). The enzyme catalyses 1,2-dihexadecanoyl-sn-glycero-3-phospho-(1D-myo-inositol-5-phosphate) + GTP = 1,2-dihexadecanoyl-sn-glycero-3-phospho-(1D-myo-inositol-4,5-bisphosphate) + GDP + H(+). Functionally, participates in the biosynthesis of phosphatidylinositol 4,5-bisphosphate. Preferentially utilizes GTP, rather than ATP, for PI(5)P phosphorylation and its activity reflects changes in direct proportion to the physiological GTP concentration. Its GTP-sensing activity is critical for metabolic adaptation. In collaboration with PIP4K2A, has a role in mediating autophagy in times of nutrient stress. Required for autophagosome-lysosome fusion and the regulation of cellular lipid metabolism. PIP4Ks negatively regulate insulin signaling through a catalytic-independent mechanism. They interact with PIP5Ks and suppress PIP5K-mediated PtdIns(4,5)P2 synthesis and insulin-dependent conversion to PtdIns(3,4,5)P3. The protein is Phosphatidylinositol 5-phosphate 4-kinase type-2 beta of Mus musculus (Mouse).